Reading from the N-terminus, the 559-residue chain is Probable D-2-hydroxyglutarate dehydrogenase, mitochondrial (559 aa).

The transit peptide at 1 to 80 (MARRAAAGLL…MNFEVQKRSF (80 aa)) directs the protein to the mitochondrion. In terms of domain architecture, FAD-binding PCMH-type spans 131-310 (YKGSSQLLLL…TKIAILTPAK (180 aa)).

Belongs to the FAD-binding oxidoreductase/transferase type 4 family. Homodimer. The cofactor is FAD.

The protein localises to the mitochondrion. It carries out the reaction (R)-2-hydroxyglutarate + A = 2-oxoglutarate + AH2. Functionally, catalyzes the oxidation of D-2-hydroxyglutarate to alpha-ketoglutarate. In Oryza sativa subsp. indica (Rice), this protein is Probable D-2-hydroxyglutarate dehydrogenase, mitochondrial (D2HGDH).